Consider the following 825-residue polypeptide: Cell division cycle protein 27 homolog (825 aa).

TPR repeat units follow at residues 6–35 (EPVQ…YAEV), 38–65 (EEAL…KGHS), 67–99 (TTPQ…VFNK), and 115–145 (CFTL…LSLN). A phosphothreonine mark is found at T205 and T209. Position 291 is a phosphoserine (S291). A disordered region spans residues 306–423 (SVIDVAPTGA…TNKGGLTQPS (118 aa)). Phosphothreonine is present on T313. A compositionally biased stretch (polar residues) spans 326 to 341 (QTGTKSVFSQSGNSRE). Phosphoserine is present on S339. The segment covering 349 to 362 (QTQSSGPQTSTTPQ) has biased composition (low complexity). Residues 363–372 (VLSPTITSPP) show a composition bias toward polar residues. At T367 the chain carries Phosphothreonine. Phosphoserine is present on residues S380 and S387. The span at 381 to 391 (RLFTSDSSTTK) shows a compositional bias: polar residues. Residues 396–414 (KLKMKFPPKIPNRKTKSKT) are compositionally biased toward basic residues. S427 is modified (phosphoserine). T431 bears the Phosphothreonine mark. A phosphoserine mark is found at S436 and S439. Phosphothreonine is present on T447. TPR repeat units follow at residues 465–495 (SLLR…LPSH), 499–528 (TGWV…EVRR), 533–563 (RVEG…LTDM), 567–598 (SPEA…IQVD), 601–631 (YAYA…AIRV), 635–667 (HYNA…DINP), 670–702 (SVLL…IDPK), 704–734 (PLCK…KQIV), and 737–768 (ESLV…MDLD). The segment at 782-825 (KRYLPDDEEPITQEEQIMGTDESQESSMTDADDTQLHAAESDEF) is disordered. S822 bears the Phosphoserine mark.

The protein belongs to the APC3/CDC27 family. Homodimer. The mammalian APC/C is composed at least of 14 distinct subunits ANAPC1, ANAPC2, CDC27/APC3, ANAPC4, ANAPC5, CDC16/APC6, ANAPC7, CDC23/APC8, ANAPC10, ANAPC11, CDC26/APC12, ANAPC13, ANAPC15 and ANAPC16 that assemble into a complex of at least 19 chains with a combined molecular mass of around 1.2 MDa; APC/C interacts with FZR1 and FBXO5. Interacts with RB. Interacts with FAM168B/MANI. Interacts with MCPH1. Post-translationally, phosphorylated. Phosphorylation on Ser-427 and Thr-447 occurs specifically during mitosis.

The protein localises to the nucleus. The protein resides in the cytoplasm. It localises to the cytoskeleton. It is found in the spindle. It participates in protein modification; protein ubiquitination. Its function is as follows. Component of the anaphase promoting complex/cyclosome (APC/C), a cell cycle-regulated E3 ubiquitin ligase that controls progression through mitosis and the G1 phase of the cell cycle. The APC/C complex acts by mediating ubiquitination and subsequent degradation of target proteins: it mainly mediates the formation of 'Lys-11'-linked polyubiquitin chains and, to a lower extent, the formation of 'Lys-48'- and 'Lys-63'-linked polyubiquitin chains. The APC/C complex catalyzes assembly of branched 'Lys-11'-/'Lys-48'-linked branched ubiquitin chains on target proteins. The chain is Cell division cycle protein 27 homolog (Cdc27) from Mus musculus (Mouse).